Here is a 432-residue protein sequence, read N- to C-terminus: Probable pectate lyase 22 (432 aa).

The N-terminal stretch at 1 to 45 (MFRPNSLLIPSNLSTTKSQRNTMLNSSYLSFALIFFCCILFSALA) is a signal peptide. Residue Asn65 is glycosylated (N-linked (GlcNAc...) asparagine). Ca(2+) contacts are provided by Asp228, Asp252, and Asp256. Arg308 is an active-site residue.

The protein belongs to the polysaccharide lyase 1 family. It depends on Ca(2+) as a cofactor.

The enzyme catalyses Eliminative cleavage of (1-&gt;4)-alpha-D-galacturonan to give oligosaccharides with 4-deoxy-alpha-D-galact-4-enuronosyl groups at their non-reducing ends.. It functions in the pathway glycan metabolism; pectin degradation; 2-dehydro-3-deoxy-D-gluconate from pectin: step 2/5. The chain is Probable pectate lyase 22 from Arabidopsis thaliana (Mouse-ear cress).